Consider the following 303-residue polypeptide: Probable 5-dehydro-4-deoxyglucarate dehydratase (303 aa).

This sequence belongs to the DapA family.

The enzyme catalyses 5-dehydro-4-deoxy-D-glucarate + H(+) = 2,5-dioxopentanoate + CO2 + H2O. It functions in the pathway carbohydrate acid metabolism; D-glucarate degradation; 2,5-dioxopentanoate from D-glucarate: step 2/2. In Acinetobacter baumannii (strain ATCC 17978 / DSM 105126 / CIP 53.77 / LMG 1025 / NCDC KC755 / 5377), this protein is Probable 5-dehydro-4-deoxyglucarate dehydratase.